Consider the following 347-residue polypeptide: MKPPILIIIMSTVISGTMIVLTSSHWMLTWIGFEMNMLAVIPILMKKFNPRAMEASTKYFLMQATASMLLMMGITINLLHTGQWTILNNLNPTASTLMTIALAMKLGLAPFHFWVPEVTQGISLSSGMILLTWQKIAPLSVLYQISPNINPKLLLLMAILSVLIGGWGGLNQTQLRKILAYSSIAHMGWMSTILIYNPTMMLLNLIIYIMMTLSTFMLFMHNSTTTTLALSQTWNKMPLITSLILMLMLSLGGLPPLSGFIPKWMIIQELTKNEMIIMPTFLAITALLNLYFYMRLTYATALTMFPSTNNMKMKWQFENTKKTMFLPPLIVMSTMLIPLTPIISILE.

Transmembrane regions (helical) follow at residues 3 to 23 (PPIL…VLTS), 25 to 45 (HWML…PILM), 59 to 79 (YFLM…INLL), 96 to 116 (TLMT…FWVP), 122 to 142 (ISLS…LSVL), 153 to 173 (LLLL…LNQT), 178 to 198 (ILAY…IYNP), 200 to 220 (MMLL…MLFM), 237 to 257 (MPLI…LPPL), 274 to 294 (EMII…YFYM), and 325 to 345 (FLPP…IISI).

This sequence belongs to the complex I subunit 2 family. As to quaternary structure, core subunit of respiratory chain NADH dehydrogenase (Complex I) which is composed of 45 different subunits. Interacts with TMEM242.

It localises to the mitochondrion inner membrane. The enzyme catalyses a ubiquinone + NADH + 5 H(+)(in) = a ubiquinol + NAD(+) + 4 H(+)(out). Functionally, core subunit of the mitochondrial membrane respiratory chain NADH dehydrogenase (Complex I) which catalyzes electron transfer from NADH through the respiratory chain, using ubiquinone as an electron acceptor. Essential for the catalytic activity and assembly of complex I. The protein is NADH-ubiquinone oxidoreductase chain 2 of Paradoxurus hermaphroditus (Asian palm civet).